The chain runs to 166 residues: Probable dual specificity protein phosphatase H1 homolog (166 aa).

Residues 25-166 enclose the Tyrosine-protein phosphatase domain; it reads DITKITDYVY…FLNQIIDKYI (142 aa). Cys108 acts as the Phosphocysteine intermediate in catalysis.

This sequence belongs to the protein-tyrosine phosphatase family. Non-receptor class dual specificity subfamily. In terms of assembly, homodimer.

It localises to the virion. Its subcellular location is the host cytoplasm. It carries out the reaction O-phospho-L-tyrosyl-[protein] + H2O = L-tyrosyl-[protein] + phosphate. It catalyses the reaction O-phospho-L-seryl-[protein] + H2O = L-seryl-[protein] + phosphate. In terms of biological role, serine/Tyrosine phosphatase which down-regulates cellular antiviral response by dephosphorylating activated STAT1 and blocking interferon (IFN)-stimulated innate immune responses. The chain is Probable dual specificity protein phosphatase H1 homolog from Vertebrata (FPV).